The primary structure comprises 263 residues: Phosphate import ATP-binding protein PstB (263 aa).

The region spanning 16–258 is the ABC transporter domain; that stretch reads VTARNVTVSY…PRDTRTQDYI (243 aa). Position 48–55 (48–55) interacts with ATP; that stretch reads GPSGCGKS.

It belongs to the ABC transporter superfamily. Phosphate importer (TC 3.A.1.7) family. In terms of assembly, the complex is composed of two ATP-binding proteins (PstB), two transmembrane proteins (PstC and PstA) and a solute-binding protein (PstS).

Its subcellular location is the cell inner membrane. The enzyme catalyses phosphate(out) + ATP + H2O = ADP + 2 phosphate(in) + H(+). Part of the ABC transporter complex PstSACB involved in phosphate import. Responsible for energy coupling to the transport system. This chain is Phosphate import ATP-binding protein PstB, found in Maricaulis maris (strain MCS10) (Caulobacter maris).